The sequence spans 367 residues: MSLSDQVLAVNDDLPIRTDKPVHSGKVRSVYWLTEEDSRRLIKEKGYNVAPDAPLAIMVISDRISAFDCIWRGEGDLKGIPGKGAALNAISNHWFQLFKDNGLADSHILDIPHPFVWIVQKAKPVMIEAICRQYITGSMWRAYTQGEREFCGITLPERLEKDEQLAELLLTPSTKGILKGIDGVPEVDDVNITRKNIEDNYDKFNFSCVEDIATYEKLLKEGFAVIAKALTKIDQIFVDTKFEFGYVEDAQGNEKLIYMDEVGTPDSSRIWDTKAYRSGHIIENSKEGFRQFLLNHFPDPDILLNKNRMEERFALAKENALPLEAMMDLSKTYLDIAAKITGAPITLSDNPKAEIIKVLKEEYQLVD.

Belongs to the SAICAR synthetase family.

It catalyses the reaction 5-amino-1-(5-phospho-D-ribosyl)imidazole-4-carboxylate + L-aspartate + ATP = (2S)-2-[5-amino-1-(5-phospho-beta-D-ribosyl)imidazole-4-carboxamido]succinate + ADP + phosphate + 2 H(+). It functions in the pathway purine metabolism; IMP biosynthesis via de novo pathway; 5-amino-1-(5-phospho-D-ribosyl)imidazole-4-carboxamide from 5-amino-1-(5-phospho-D-ribosyl)imidazole-4-carboxylate: step 1/2. This chain is Phosphoribosylaminoimidazole-succinocarboxamide synthase, found in Aliivibrio fischeri (strain MJ11) (Vibrio fischeri).